The primary structure comprises 501 residues: DELTA-alicitoxin-Pse2a (501 aa).

The first 22 residues, 1-22, serve as a signal peptide directing secretion; it reads MSPYFKLSSALIFLAITMEALC. The propeptide occupies 23–35; that stretch reads SPIENTSTSNKDN. Positions 23–359 constitute an MACPF domain; sequence SPIENTSTSN…GFLHFGCSYL (337 aa). A coiled-coil region spans residues 135–159; that stretch reads AAVTNNIASSEEEVQGLSLNLKAYS. The EGF-like domain maps to 388–422; it reads VCKVGPEGCQHHEDCHYRAAFWCECGGPYDLARTC. 3 disulfide bridges follow: C389/C402, C396/C410, and C412/C422.

It is found in the secreted. The protein resides in the nematocyst. In terms of biological role, causes lethal toxicity to the shrimp Palaemon paucidence, and hemolytic activity toward sheep red blood cells. The protein is DELTA-alicitoxin-Pse2a of Phyllodiscus semoni (Night anemone).